Reading from the N-terminus, the 549-residue chain is Hydroxylamine reductase (549 aa).

[4Fe-4S] cluster is bound by residues cysteine 5, cysteine 8, cysteine 17, and cysteine 23. 8 residues coordinate hybrid [4Fe-2O-2S] cluster: histidine 250, glutamate 274, cysteine 318, cysteine 404, cysteine 432, cysteine 457, glutamate 491, and lysine 493. Cysteine 404 is modified (cysteine persulfide).

The protein belongs to the HCP family. Requires [4Fe-4S] cluster as cofactor. It depends on hybrid [4Fe-2O-2S] cluster as a cofactor.

It is found in the cytoplasm. It carries out the reaction A + NH4(+) + H2O = hydroxylamine + AH2 + H(+). Functionally, catalyzes the reduction of hydroxylamine to form NH(3) and H(2)O. This is Hydroxylamine reductase from Geobacter metallireducens (strain ATCC 53774 / DSM 7210 / GS-15).